A 204-amino-acid polypeptide reads, in one-letter code: Octanoyltransferase (204 aa).

Residues 27–204 enclose the BPL/LPL catalytic domain; it reads KNTKDELWIV…LINYVSRNRH (178 aa). Residues 66–73, 133–135, and 146–148 contribute to the substrate site; these read RGGQVTYH, ALG, and GLS. Cys164 functions as the Acyl-thioester intermediate in the catalytic mechanism.

It belongs to the LipB family.

It localises to the cytoplasm. It carries out the reaction octanoyl-[ACP] + L-lysyl-[protein] = N(6)-octanoyl-L-lysyl-[protein] + holo-[ACP] + H(+). It functions in the pathway protein modification; protein lipoylation via endogenous pathway; protein N(6)-(lipoyl)lysine from octanoyl-[acyl-carrier-protein]: step 1/2. Its function is as follows. Catalyzes the transfer of endogenously produced octanoic acid from octanoyl-acyl-carrier-protein onto the lipoyl domains of lipoate-dependent enzymes. Lipoyl-ACP can also act as a substrate although octanoyl-ACP is likely to be the physiological substrate. The chain is Octanoyltransferase from Vesicomyosocius okutanii subsp. Calyptogena okutanii (strain HA).